Reading from the N-terminus, the 197-residue chain is Allatostatins (197 aa).

A signal peptide spans 1 to 27 (MRSRTSVLTSSLAFLYFFGIVGRSALA). A propeptide spanning residues 28–56 (MEETPASSMNLQHYNNMLNPMVFDDTMPE) is cleaved from the precursor. Isoleucine 76 is modified (isoleucine amide). Positions 80–86 (WIDTNDN) are excised as a propeptide. Residues leucine 96, leucine 106, leucine 154, and leucine 184 each carry the leucine amide modification. Positions 161–197 (YSGGQPLGSKRPNDMLSQRYHFGLGKRMSEDEEESSQ) are disordered. The propeptide occupies 188 to 197 (MSEDEEESSQ).

This sequence belongs to the allatostatin family.

It localises to the secreted. In terms of biological role, neuropeptides. This Apis mellifera (Honeybee) protein is Allatostatins.